The primary structure comprises 371 residues: Chaperone protein DnaJ (371 aa).

Positions 5-69 (DYYEVLGLSK…QKRAQYDQFG (65 aa)) constitute a J domain. A CR-type zinc finger spans residues 133-215 (GKELNVEIPV…CHGSSKVRKR (83 aa)). Zn(2+) contacts are provided by Cys146, Cys149, Cys163, Cys166, Cys189, Cys192, Cys203, and Cys206. CXXCXGXG motif repeat units lie at residues 146–153 (CDTCKGSG), 163–170 (CKHCSGSG), 189–196 (CGHCSGTG), and 203–210 (CTTCHGSS).

The protein belongs to the DnaJ family. Homodimer. It depends on Zn(2+) as a cofactor.

It is found in the cytoplasm. Participates actively in the response to hyperosmotic and heat shock by preventing the aggregation of stress-denatured proteins and by disaggregating proteins, also in an autonomous, DnaK-independent fashion. Unfolded proteins bind initially to DnaJ; upon interaction with the DnaJ-bound protein, DnaK hydrolyzes its bound ATP, resulting in the formation of a stable complex. GrpE releases ADP from DnaK; ATP binding to DnaK triggers the release of the substrate protein, thus completing the reaction cycle. Several rounds of ATP-dependent interactions between DnaJ, DnaK and GrpE are required for fully efficient folding. Also involved, together with DnaK and GrpE, in the DNA replication of plasmids through activation of initiation proteins. The chain is Chaperone protein DnaJ from Bacillus cereus (strain ATCC 14579 / DSM 31 / CCUG 7414 / JCM 2152 / NBRC 15305 / NCIMB 9373 / NCTC 2599 / NRRL B-3711).